A 257-amino-acid chain; its full sequence is MTAAVFFGCAFIAFGPALALYVFTIATEPLRIIFLIAGAFFWLVSLLISSLVWFMARVIIDNKDGPTQKYLLIFGTFVSVYIQEMFRFAYYRLLKKASEGLKSINPGETAPSMRLLAYVSGLGFGIMSGVFSFVNTLSDSLGPGTVGIHGDSPQFFLYSAFMTLVIILLHVFWGIVFFDGCEKKKWGILLIVLLTHLLVSAQTFISSYYGINLASAFIILVLMGTWAFLAAGGSCRSLKLCLLCQDKDFLLYNQRSR.

The next 7 membrane-spanning stretches (helical) occupy residues 5–25 (VFFG…VFTI), 32–52 (IIFL…SSLV), 70–90 (YLLI…RFAY), 115–135 (LLAY…SFVN), 158–178 (YSAF…IVFF), 186–206 (WGIL…TFIS), and 213–233 (LASA…AAGG).

The protein belongs to the APH-1 family. Probable component of the gamma-secretase complex, a complex composed of a presenilin homodimer (PSEN1 or PSEN2), nicastrin (NCSTN), APH1 (APH1A or APH1B) and PEN2. Such minimal complex is sufficient for secretase activity, although other components may exist. Interacts with PSEN1 and PSEN2.

The protein resides in the membrane. Its function is as follows. Probable subunit of the gamma-secretase complex, an endoprotease complex that catalyzes the intramembrane cleavage of integral proteins such as Notch receptors and APP (amyloid-beta precursor protein). It probably represents a stabilizing cofactor for the presenilin homodimer that promotes the formation of a stable complex. Probably present in a minority of gamma-secretase complexes compared to APH1A. The polypeptide is Gamma-secretase subunit APH-1B (APH1B) (Pongo abelii (Sumatran orangutan)).